Reading from the N-terminus, the 87-residue chain is MGSFSITHWLILLVVVVVVFGTSKLRNAGKDLGGAVKGFKEAVKDENTEHAKKHVVLDHDAGTNPPNITGTQSDTTSANKVDDTHNV.

A helical transmembrane segment spans residues 1–21 (MGSFSITHWLILLVVVVVVFG). The interval 56–87 (VLDHDAGTNPPNITGTQSDTTSANKVDDTHNV) is disordered. Over residues 64 to 79 (NPPNITGTQSDTTSAN) the composition is skewed to polar residues.

The protein belongs to the TatA/E family. In terms of assembly, the Tat system comprises two distinct complexes: a TatABC complex, containing multiple copies of TatA, TatB and TatC subunits, and a separate TatA complex, containing only TatA subunits. Substrates initially bind to the TatABC complex, which probably triggers association of the separate TatA complex to form the active translocon.

Its subcellular location is the cell inner membrane. Part of the twin-arginine translocation (Tat) system that transports large folded proteins containing a characteristic twin-arginine motif in their signal peptide across membranes. TatA could form the protein-conducting channel of the Tat system. The sequence is that of Sec-independent protein translocase protein TatA from Psychrobacter arcticus (strain DSM 17307 / VKM B-2377 / 273-4).